A 157-amino-acid polypeptide reads, in one-letter code: Ribosomal RNA large subunit methyltransferase H (157 aa).

Residues L73, G105, and 124–129 (MSKMTF) contribute to the S-adenosyl-L-methionine site.

Belongs to the RNA methyltransferase RlmH family. In terms of assembly, homodimer.

The protein localises to the cytoplasm. It carries out the reaction pseudouridine(1915) in 23S rRNA + S-adenosyl-L-methionine = N(3)-methylpseudouridine(1915) in 23S rRNA + S-adenosyl-L-homocysteine + H(+). Specifically methylates the pseudouridine at position 1915 (m3Psi1915) in 23S rRNA. This is Ribosomal RNA large subunit methyltransferase H from Bacteroides thetaiotaomicron (strain ATCC 29148 / DSM 2079 / JCM 5827 / CCUG 10774 / NCTC 10582 / VPI-5482 / E50).